Consider the following 402-residue polypeptide: D-mannonate dehydratase (402 aa).

Substrate-binding residues include N37 and H122. Y159 serves as the catalytic Proton donor/acceptor. Residue D210 participates in Mg(2+) binding. H212 (proton donor/acceptor) is an active-site residue. 2 residues coordinate Mg(2+): E236 and E262. Positions 262, 283, 312, 316, and 339 each coordinate substrate.

It belongs to the mandelate racemase/muconate lactonizing enzyme family. GalD subfamily. It depends on Mg(2+) as a cofactor.

It catalyses the reaction D-mannonate = 2-dehydro-3-deoxy-D-gluconate + H2O. The protein operates within carbohydrate metabolism; pentose and glucuronate interconversion. Its function is as follows. Catalyzes the dehydration of D-mannonate. Has no detectable activity with a panel of 70 other acid sugars (in vitro). In Rhizorhabdus wittichii (strain DSM 6014 / CCUG 31198 / JCM 15750 / NBRC 105917 / EY 4224 / RW1) (Sphingomonas wittichii), this protein is D-mannonate dehydratase.